A 79-amino-acid polypeptide reads, in one-letter code: MSSGGLLLLLGLLTLWEVLTPVSSKDRPKFYELPADIGPCEDFTGAFHYSPREHEYIEFIYGGCEGNANNFNTLEECET.

Residues 1–24 (MSSGGLLLLLGLLTLWEVLTPVSS) form the signal peptide. One can recognise a BPTI/Kunitz inhibitor domain in the interval 31–79 (YELPADIGPCEDFTGAFHYSPREHEYIEFIYGGCEGNANNFNTLEECET). Cysteines 40 and 64 form a disulfide.

It localises to the secreted. Functionally, serine protease inhibitor. The protein is Scutellin-5 of Oxyuranus scutellatus scutellatus (Australian taipan).